Consider the following 83-residue polypeptide: Small ribosomal subunit protein bS20 (83 aa).

Belongs to the bacterial ribosomal protein bS20 family.

In terms of biological role, binds directly to 16S ribosomal RNA. This chain is Small ribosomal subunit protein bS20, found in Leuconostoc citreum (strain KM20).